Consider the following 484-residue polypeptide: UDP-N-acetylmuramoyl-L-alanyl-D-glutamate--2,6-diaminopimelate ligase (484 aa).

Residue 110-116 (GTNGKTT) coordinates ATP. UDP-N-acetyl-alpha-D-muramoyl-L-alanyl-D-glutamate is bound by residues 152 to 153 (TT), Ser179, and Arg187. Lys219 carries the N6-carboxylysine modification. Residues Arg381, 405 to 408 (DNPR), Gly455, and Glu459 each bind meso-2,6-diaminopimelate. The short motif at 405–408 (DNPR) is the Meso-diaminopimelate recognition motif element.

It belongs to the MurCDEF family. MurE subfamily. Mg(2+) is required as a cofactor. In terms of processing, carboxylation is probably crucial for Mg(2+) binding and, consequently, for the gamma-phosphate positioning of ATP.

It localises to the cytoplasm. It carries out the reaction UDP-N-acetyl-alpha-D-muramoyl-L-alanyl-D-glutamate + meso-2,6-diaminopimelate + ATP = UDP-N-acetyl-alpha-D-muramoyl-L-alanyl-gamma-D-glutamyl-meso-2,6-diaminopimelate + ADP + phosphate + H(+). It participates in cell wall biogenesis; peptidoglycan biosynthesis. Catalyzes the addition of meso-diaminopimelic acid to the nucleotide precursor UDP-N-acetylmuramoyl-L-alanyl-D-glutamate (UMAG) in the biosynthesis of bacterial cell-wall peptidoglycan. This Clostridium perfringens (strain 13 / Type A) protein is UDP-N-acetylmuramoyl-L-alanyl-D-glutamate--2,6-diaminopimelate ligase.